Consider the following 611-residue polypeptide: Acetylcholinesterase (611 aa).

Positions 1 to 31 (MRPPWCPLYTPSLAAPILLLLLFLLGGGAEA) are cleaved as a signal peptide. Cysteines 97 and 124 form a disulfide. S231 acts as the Acyl-ester intermediate in catalysis. Cysteines 285 and 300 form a disulfide. A glycan (N-linked (GlcNAc...) asparagine) is linked at N293. Catalysis depends on E362, which acts as the Charge relay system. N378 carries an N-linked (GlcNAc...) asparagine glycan. An intrachain disulfide couples C437 to C557. The active-site Charge relay system is the H475. N-linked (GlcNAc...) asparagine glycosylation occurs at N492.

It belongs to the type-B carboxylesterase/lipase family. In terms of assembly, interacts with PRIMA1. The interaction with PRIMA1 is required to anchor it to the basal lamina of cells and organize into tetramers. Isoform H generates GPI-anchored dimers; disulfide linked. Isoform T generates multiple structures, ranging from monomers and dimers to collagen-tailed and hydrophobic-tailed forms, in which catalytic tetramers are associated with anchoring proteins that attach them to the basal lamina or to cell membranes. In the collagen-tailed forms, isoform T subunits are associated with a specific collagen, COLQ, which triggers the formation of isoform T tetramers, from monomers and dimers.

The protein resides in the synapse. The protein localises to the secreted. Its subcellular location is the cell membrane. It carries out the reaction acetylcholine + H2O = choline + acetate + H(+). Functionally, terminates signal transduction at the neuromuscular junction by rapid hydrolysis of the acetylcholine released into the synaptic cleft. This is Acetylcholinesterase (ACHE) from Felis catus (Cat).